Here is a 579-residue protein sequence, read N- to C-terminus: ERV-BabFcenv provirus ancestral Env polyprotein (579 aa).

Residues 1–22 (MISAVLNLPSTPLLPLLWFTLI) form the signal peptide. The interval 23–387 (IPASLTNPKF…LSSSNNIQKQ (365 aa)) is surface protein. The Extracellular segment spans residues 23–523 (IPASLTNPKF…VWLLPVVQQM (501 aa)). 4 N-linked (GlcNAc...) asparagine glycosylation sites follow: Asn135, Asn203, Asn242, and Asn251. The short motif at 255–258 (CFLC) is the CXXC element. Asn276, Asn312, and Asn337 each carry an N-linked (GlcNAc...) asparagine glycan. The fusion peptide stretch occupies residues 388-408 (AVFLPLIIGVSLASSLVASGL). A transmembrane protein region spans residues 388–579 (AVFLPLIIGV…LPTSDPNYAP (192 aa)). A CKS-17 motif is present at residues 453-469 (AQNRRALDLLTAEKGGT). Residues Cys470 and Cys477 are joined by a disulfide bond. The CX6CC motif lies at 470 to 478 (CLFLGEECC). A glycan (N-linked (GlcNAc...) asparagine) is linked at Asn482. The helical transmembrane segment at 524-544 (LPFLIPILILCLMLCLAPILI) threads the bilayer. Over 545-579 (KFLRARVQEITRVTFNQMLLHPYTQLPTSDPNYAP) the chain is Cytoplasmic.

It belongs to the gamma type-C retroviral envelope protein family. HERV class-I F(c)1 env subfamily. Specific enzymatic cleavages in vivo yield the mature SU and TM proteins. In terms of processing, the CXXC motif is highly conserved across a broad range of retroviral envelope proteins. It is thought to participate in the formation of a labile disulfide bond possibly with the CX6CC motif present in the transmembrane domain.

The protein localises to the cell membrane. In terms of biological role, retroviral envelope proteins mediate receptor recognition and membrane fusion during early infection. Endogenous envelope proteins may have kept, lost or modified their original function during evolution. The protein is ERV-BabFcenv provirus ancestral Env polyprotein of Papio anubis (Olive baboon).